The sequence spans 199 residues: Recombination protein RecR (199 aa).

A C4-type zinc finger spans residues 56–71; sequence CTVCFNVTEQETCNIC. The 96-residue stretch at 79–174 folds into the Toprim domain; it reads SVICVVEESK…TVTRLASGLP (96 aa).

It belongs to the RecR family.

Its function is as follows. May play a role in DNA repair. It seems to be involved in an RecBC-independent recombinational process of DNA repair. It may act with RecF and RecO. The protein is Recombination protein RecR of Paenarthrobacter aurescens (strain TC1).